We begin with the raw amino-acid sequence, 644 residues long: Exoribonuclease 2 (644 aa).

In terms of domain architecture, RNB spans 189–516; sequence REDLTALDFV…NHRLLKAVIK (328 aa). Positions 561 to 643 constitute an S1 motif domain; it reads DTRFAAEIVD…ETRSIIARPV (83 aa).

This sequence belongs to the RNR ribonuclease family. RNase II subfamily.

It is found in the cytoplasm. The catalysed reaction is Exonucleolytic cleavage in the 3'- to 5'-direction to yield nucleoside 5'-phosphates.. Its function is as follows. Involved in mRNA degradation. Hydrolyzes single-stranded polyribonucleotides processively in the 3' to 5' direction. The polypeptide is Exoribonuclease 2 (Escherichia coli O8 (strain IAI1)).